Here is a 566-residue protein sequence, read N- to C-terminus: MKKKSLALVLATGMAVTTFGGTGSAFADSKNVLSTKKYNETVQSPEFISGDLTEATGKKAESVVFDYLNAAKGDYKLGEKSAQDSFKVKQVKKDAVTDSTVVRMQQVYEGVPVWGSTQVAHVSKDGSLKVLSGTVAPDLDKKEKLKNKNKIEGAKAIEIAQQDLGVTPKYEVEPKADLYVYQNGEETTYAYVVNLNFLDPSPGNYYYFIEADSGKVLNKFNTIDHVTNDDKSPVKQEAPKQDAKAVVKPVTGTNKVGTGKGVLGDTKSLNTTLSGSSYYLQDNTRGATIFTYDAKNRSTLPGTLWADADNVFNAAYDAAAVDAHYYAGKTYDYYKATFNRNSINDAGAPLKSTVHYGSNYNNAFWNGSQMVYGDGDGVTFTSLSGGIDVIGHELTHAVTENSSNLIYQNESGALNEAISDIFGTLVEFYDNRNPDWEIGEDIYTPGKAGDALRSMSDPTKYGDPDHYSKRYTGSSDNGGVHTNSGIINKQAYLLANGGTHYGVTVTGIGKDKLGAIYYRANTQYFTQSTTFSQARAGAVQAAADLYGANSAEVAAVKQSFSAVGVN.

The N-terminal stretch at 1-27 (MKKKSLALVLATGMAVTTFGGTGSAFA) is a signal peptide. Residues 28–249 (DSKNVLSTKK…KQDAKAVVKP (222 aa)) constitute a propeptide, activation peptide. Asp-307, Asp-309, Val-311, and Asp-388 together coordinate Ca(2+). His-392 contacts Zn(2+). Glu-393 is a catalytic residue. The Zn(2+) site is built by His-396 and Glu-416. Ca(2+) contacts are provided by Glu-427, Asn-433, Asp-435, Glu-437, Glu-440, Tyr-443, Thr-444, Lys-447, and Asp-450. His-481 (proton donor) is an active-site residue.

The protein belongs to the peptidase M4 family. It depends on Ca(2+) as a cofactor. Zn(2+) is required as a cofactor.

It is found in the secreted. The catalysed reaction is Similar, but not identical, to that of thermolysin.. Its function is as follows. Extracellular zinc metalloprotease. In Bacillus cereus, this protein is Bacillolysin (npr).